The primary structure comprises 588 residues: Ribonuclease Y (588 aa).

The helical transmembrane segment at 7 to 27 threads the bilayer; that stretch reads VLLVAVLLLALIVLGAVLVGV. Positions 130 to 162 are disordered; it reads ARRSGEREAAVLATTTREQAAEVERRAARMDDR. Residues 148–162 show a composition bias toward basic and acidic residues; sequence QAAEVERRAARMDDR. Positions 278–359 constitute a KH domain; that stretch reads VVSVLHLPGD…HRIEEVHDLA (82 aa). Positions 404 to 497 constitute an HD domain; the sequence is VLKHLVETAH…TQASDACSGG (94 aa).

It belongs to the RNase Y family.

The protein localises to the cell membrane. Its function is as follows. Endoribonuclease that initiates mRNA decay. This is Ribonuclease Y from Salinispora arenicola (strain CNS-205).